Reading from the N-terminus, the 142-residue chain is Large ribosomal subunit protein uL11 (142 aa).

It belongs to the universal ribosomal protein uL11 family. As to quaternary structure, part of the ribosomal stalk of the 50S ribosomal subunit. Interacts with L10 and the large rRNA to form the base of the stalk. L10 forms an elongated spine to which L12 dimers bind in a sequential fashion forming a multimeric L10(L12)X complex. Post-translationally, one or more lysine residues are methylated.

Forms part of the ribosomal stalk which helps the ribosome interact with GTP-bound translation factors. This Yersinia pseudotuberculosis serotype O:1b (strain IP 31758) protein is Large ribosomal subunit protein uL11.